We begin with the raw amino-acid sequence, 339 residues long: Transcription factor IIIA (339 aa).

9 consecutive C2H2-type zinc fingers follow at residues 12-36 (FICS…LCKH), 42-66 (FPCT…VLSH), 72-97 (CKCE…KRAH), 104-128 (YVCY…QYIH), 134-158 (FKCS…EKTH), 161-187 (YPCR…AELH), 190-212 (VTCS…KKIH), 219-244 (YRCP…LTFH), and 250-274 (FVCE…FNTH). A disordered region spans residues 271–339 (FNTHDPEKKK…LPVLENLTLK (69 aa)). Residues 299 to 309 (KPKKSKKKKKP) are compositionally biased toward basic residues. The span at 311–323 (QTPAMESQEQQPD) shows a compositional bias: polar residues.

It localises to the nucleus. Functionally, involved in ribosomal large subunit biogenesis. Interacts with the internal control region (ICR) of approximately 50 bases within the 5S RNA genes, is required for correct transcription of these genes by RNA polymerase III. Also binds the transcribed 5S RNA's. In Anaxyrus americanus (American toad), this protein is Transcription factor IIIA (gtf3a).